A 208-amino-acid polypeptide reads, in one-letter code: Neuroendocrine protein 7B2 (208 aa).

Residues 1 to 26 (MGMYSAIPLALPMVLLMVYGLTPSLG) form the signal peptide. A disulfide bridge connects residues Cys-120 and Cys-129. Phosphoserine is present on Ser-204.

This sequence belongs to the 7B2 family. As to quaternary structure, interacts with pcsk2 early in the secretory pathway. Dissociation occurs at later stages. In terms of processing, proteolytically cleaved in the Golgi by a furin-like convertase to generate bioactive peptides. Post-translationally, sulfated on tyrosine residues.

It is found in the secreted. In terms of biological role, acts as a molecular chaperone for pcsk2, preventing its premature activation in the regulated secretory pathway. Binds to inactive pcsk2 in the endoplasmic reticulum and facilitates its transport from there to later compartments of the secretory pathway where it is proteolytically matured and activated. Also required for cleavage of pcsk2 but does not appear to be involved in its folding. The protein is Neuroendocrine protein 7B2 (scg5.L) of Xenopus laevis (African clawed frog).